The sequence spans 150 residues: 16.6 kDa heat shock protein (150 aa).

One can recognise a sHSP domain in the interval 31 to 150 (AERCPVLTNV…PQLKAIPISG (120 aa)).

This sequence belongs to the small heat shock protein (HSP20) family. In terms of assembly, may form oligomeric structures.

The protein resides in the cytoplasm. The protein is 16.6 kDa heat shock protein (HSP16.6) of Oryza sativa subsp. japonica (Rice).